Here is a 964-residue protein sequence, read N- to C-terminus: MKKAFFFFLIGNSLSGLAREVPSRIFLMPNSVPDPTKESLSNKISLTGDTHNLTNCYLDNLRYILAILQKTPNEGAAVTITDYLSFFDTQKEGIYFAKNLTPESGGAIGYASPNSPTVEIRDTIGPVIFENNTCCRLFTWRNPYAADKIREGGAIHAQNLYINHNHDVVGFMKNFSYVQGGAISTANTFVVSENQSCFLFMDNICIQTNTAGKGGAIYAGTSNSFESNNCDLFFINNACCAGGAIFSPICSLTGNRGNIVFYNNRCFKNVETASSEASDGGAIKVTTRLDVTGNRGRIFFSDNITKNYGGAIYAPVVTLVDNGPTYFINNIANNKGGAIYIDGTSNSKISADRHAIIFNENIVTNVTNANGTSTSANPPRRNAITVASSSGEILLGAGSSQNLIFYDPIEVSNAGVSVSFNKEADQTGSVVFSGATVNSADFHQRNLQTKTPAPLTLSNGFLCIEDHAQLTVNRFTQTGGVVSLGNGAVLSCYKNGTGDSASNASITLKHIGLNLSSILKSGAEIPLLWVEPTNNSNNYTADTAATFSLSDVKLSLIDDYGNSPYESTDLTHALSSQPMLSISEASDNQLQSENIDFSGLNVPHYGWQGLWTWGWAKTQDPEPASSATITDPQKANRFHRTLLLTWLPAGYVPSPKHRSPLIANTLWGNMLLATESLKNSAELTPSGHPFWGITGGGLGMMVYQDPRENHPGFHMRSSGYSAGMIAGQTHTFSLKFSQTYTKLNERYAKNNVSSKNYSCQGEMLFSLQEGFLLTKLVGLYSYGDHNCHHFYTQGENLTSQGTFRSQTMGGAVFFDLPMKPFGSTHILTAPFLGALGIYSSLSHFTEVGAYPRSFSTKTPLINVLVPIGVKGSFMNATHRPQAWTVELAYQPVLYRQEPGIAAQLLASKGIWFGSGSPSSRHAMSYKISQQTQPLSWLTLHFQYHGFYSSSTFCNYLNGEIALRF.

Residues 1-18 form the signal peptide; that stretch reads MKKAFFFFLIGNSLSGLA. Residues 683 to 964 enclose the Autotransporter domain; it reads LTPSGHPFWG…YLNGEIALRF (282 aa).

This sequence belongs to the PMP outer membrane protein family.

The protein resides in the secreted. Its subcellular location is the cell wall. It is found in the cell outer membrane. In Chlamydia trachomatis serovar D (strain ATCC VR-885 / DSM 19411 / UW-3/Cx), this protein is Probable outer membrane protein PmpE (pmpE).